The following is a 252-amino-acid chain: Isoprenyl transferase (252 aa).

Asp-32 is a catalytic residue. Asp-32 is a binding site for Mg(2+). Substrate contacts are provided by residues 33-36 (GNGR), Trp-37, Arg-45, His-49, and 77-79 (STE). Catalysis depends on Asn-80, which acts as the Proton acceptor. Residues Trp-81, Arg-83, Arg-200, and 206–208 (RLS) contribute to the substrate site. Glu-219 contacts Mg(2+).

This sequence belongs to the UPP synthase family. Homodimer. Mg(2+) is required as a cofactor.

Its function is as follows. Catalyzes the condensation of isopentenyl diphosphate (IPP) with allylic pyrophosphates generating different type of terpenoids. The polypeptide is Isoprenyl transferase (Listeria monocytogenes serovar 1/2a (strain ATCC BAA-679 / EGD-e)).